Consider the following 185-residue polypeptide: Riboflavin kinase (185 aa).

Mg(2+) is bound by residues T41 and N43. E122 functions as the Nucleophile in the catalytic mechanism.

This sequence belongs to the flavokinase family. The cofactor is Zn(2+). It depends on Mg(2+) as a cofactor.

It carries out the reaction riboflavin + ATP = FMN + ADP + H(+). It participates in cofactor biosynthesis; FMN biosynthesis; FMN from riboflavin (ATP route): step 1/1. Catalyzes the phosphorylation of riboflavin (vitamin B2) to form flavin mononucleotide (FMN) coenzyme. This Kluyveromyces lactis (strain ATCC 8585 / CBS 2359 / DSM 70799 / NBRC 1267 / NRRL Y-1140 / WM37) (Yeast) protein is Riboflavin kinase (FMN1).